The primary structure comprises 251 residues: Hydroxyacylglutathione hydrolase (251 aa).

Positions 53, 55, 57, 58, 110, 127, and 165 each coordinate Zn(2+).

It belongs to the metallo-beta-lactamase superfamily. Glyoxalase II family. In terms of assembly, monomer. Requires Zn(2+) as cofactor.

It catalyses the reaction an S-(2-hydroxyacyl)glutathione + H2O = a 2-hydroxy carboxylate + glutathione + H(+). The protein operates within secondary metabolite metabolism; methylglyoxal degradation; (R)-lactate from methylglyoxal: step 2/2. Its function is as follows. Thiolesterase that catalyzes the hydrolysis of S-D-lactoyl-glutathione to form glutathione and D-lactic acid. This Klebsiella pneumoniae subsp. pneumoniae (strain ATCC 700721 / MGH 78578) protein is Hydroxyacylglutathione hydrolase.